Reading from the N-terminus, the 111-residue chain is Large ribosomal subunit protein uL22 (111 aa).

This sequence belongs to the universal ribosomal protein uL22 family. Part of the 50S ribosomal subunit.

In terms of biological role, this protein binds specifically to 23S rRNA; its binding is stimulated by other ribosomal proteins, e.g. L4, L17, and L20. It is important during the early stages of 50S assembly. It makes multiple contacts with different domains of the 23S rRNA in the assembled 50S subunit and ribosome. Functionally, the globular domain of the protein is located near the polypeptide exit tunnel on the outside of the subunit, while an extended beta-hairpin is found that lines the wall of the exit tunnel in the center of the 70S ribosome. This Francisella philomiragia subsp. philomiragia (strain ATCC 25017 / CCUG 19701 / FSC 153 / O#319-036) protein is Large ribosomal subunit protein uL22.